The sequence spans 642 residues: Aryl hydrocarbon receptor nuclear translocator homolog (642 aa).

A bHLH domain is found at 13-66 (ASRENHCEIERRRRNKMTAYITELSDMVPTCSALARKPDKLTILRMAVAHMKAL). PAS domains are found at residues 85–156 (DQEL…ESQN) and 271–341 (TAAN…LKQK). One can recognise a PAC domain in the interval 346–389 (SLLYRARAKNSEYVWLRTQAYAFLNPYTDEVEYIVCTNSSGKTM). Residues 450-612 (QAPTPQQQQQ…GPAGAGQPQG (163 aa)) are disordered. Polar residues-rich tracts occupy residues 463–482 (RPGS…THSP) and 528–554 (YQYQ…NGNR). The span at 555-564 (QQAQPGAYQA) shows a compositional bias: low complexity.

As to quaternary structure, efficient DNA binding requires dimerization with another bHLH protein. Heterodimer with ahr, trh or sim. As to expression, at stage 11, expression is detected in tracheal pits. At later stages, strong expression is also detected in the CNS.

The protein localises to the nucleus. Its function is as follows. Heterodimers of tgo/trh are involved in the control of breathless expression. Plays a role in the cellular or tissue response to oxygen deprivation. This is Aryl hydrocarbon receptor nuclear translocator homolog (tgo) from Drosophila melanogaster (Fruit fly).